The chain runs to 356 residues: NADH-quinone oxidoreductase subunit H (356 aa).

9 helical membrane-spanning segments follow: residues Thr-17 to Ala-37, Pro-51 to Leu-71, Val-83 to Val-103, Val-116 to Gly-136, Ile-162 to Val-182, Leu-202 to Glu-222, Ile-261 to Pro-281, Leu-295 to Ala-315, and Val-334 to Pro-354.

It belongs to the complex I subunit 1 family. NDH-1 is composed of 14 different subunits. Subunits NuoA, H, J, K, L, M, N constitute the membrane sector of the complex.

It localises to the cell inner membrane. It carries out the reaction a quinone + NADH + 5 H(+)(in) = a quinol + NAD(+) + 4 H(+)(out). Functionally, NDH-1 shuttles electrons from NADH, via FMN and iron-sulfur (Fe-S) centers, to quinones in the respiratory chain. The immediate electron acceptor for the enzyme in this species is believed to be ubiquinone. Couples the redox reaction to proton translocation (for every two electrons transferred, four hydrogen ions are translocated across the cytoplasmic membrane), and thus conserves the redox energy in a proton gradient. This subunit may bind ubiquinone. This is NADH-quinone oxidoreductase subunit H from Caulobacter vibrioides (strain ATCC 19089 / CIP 103742 / CB 15) (Caulobacter crescentus).